The chain runs to 369 residues: UPF0284 protein cce_1085 (369 aa).

It belongs to the UPF0284 family.

The sequence is that of UPF0284 protein cce_1085 from Crocosphaera subtropica (strain ATCC 51142 / BH68) (Cyanothece sp. (strain ATCC 51142)).